We begin with the raw amino-acid sequence, 1527 residues long: Lysophospholipase nte1 (1527 aa).

Residues 1–69 (MADDGGPFPL…PPPAPSTMVG (69 aa)) are Cytoplasmic-facing. Residues 70 to 90 (WIGWVFSFVFQVIPSILYWAI) form a helical membrane-spanning segment. The Lumenal portion of the chain corresponds to 91-112 (TFCTITLPTWLFTLFSMSLTFT). Residues 113–133 (MNFTTLLLIALAIVSTVSWFI) traverse the membrane as a helical segment. Residues 134-1527 (RYRFLNMYSR…RTLAPRRASI (1394 aa)) lie on the Cytoplasmic side of the membrane. Disordered stretches follow at residues 240–259 (ADHE…GQNV), 299–387 (LSSS…HPDI), 576–596 (EKEQ…PFHR), and 750–785 (AHGE…RRQS). Positions 355–373 (HLEESRGTPDHDHQPESRT) are enriched in basic and acidic residues. A nucleoside 3',5'-cyclic phosphate-binding positions include 685 to 804 (GGTS…VGSV) and 846 to 966 (RLTS…IAQR). A compositionally biased stretch (low complexity) spans 761–771 (RTTTASSRTSS). Residues 1224-1388 (LVLGGGGARG…IDNLTVPHMK (165 aa)) form the PNPLA domain. The short motif at 1228 to 1233 (GGGARG) is the GXGXXG element. The GXSXG signature appears at 1255–1259 (GTSIG). Catalysis depends on S1257, which acts as the Nucleophile. The Proton acceptor role is filled by D1375. The DGA/G motif lies at 1375-1377 (DGG).

It belongs to the NTE family.

The protein resides in the endoplasmic reticulum membrane. It catalyses the reaction a 1-acyl-sn-glycero-3-phosphocholine + H2O = sn-glycerol 3-phosphocholine + a fatty acid + H(+). Its activity is regulated as follows. Inhibited by organophosphorus esters. Its function is as follows. Intracellular phospholipase B that catalyzes the double deacylation of phosphatidylcholine (PC) to glycerophosphocholine (GroPCho). Plays an important role in membrane lipid homeostasis. Responsible for the rapid PC turnover in response to inositol, elevated temperatures, or when choline is present in the growth medium. The protein is Lysophospholipase nte1 (nte1) of Aspergillus terreus (strain NIH 2624 / FGSC A1156).